The following is a 66-amino-acid chain: Large ribosomal subunit protein bL35 (66 aa).

Basic residues predominate over residues 1–16; that stretch reads MPKQKTHRASAKRFKR. Residues 1–21 form a disordered region; that stretch reads MPKQKTHRASAKRFKRTGSGG.

It belongs to the bacterial ribosomal protein bL35 family.

This chain is Large ribosomal subunit protein bL35, found in Streptococcus sanguinis (strain SK36).